The primary structure comprises 422 residues: MRSVLSLALLAANVVTAAVVSPFDYSGYKVIRVPTQKDNVKEVQRIITDLNLDTWKYPKSEGQNADIVVPPSQITSFMERISGMSMEMMHEDLGMSISNETSFEAYSAGYAPDINWFKSYHSYQDHISYLQDLQGLFRTRSEYVDAGKSHEGRTIPALHIWGSGGKNSKPAIIFHGTIHAREWITTMVTEYLAWSLLSQYNKNADITSIVDNFDIWVFPIVNPDGFAFTQTSNRLWRKNRQPNPNARCPGRDLNRNYPYQWVGPGSSSNPCSDTYRGAQPGDGTEIKVHIANMKRIASYHGIAMFVDWHSYGQLFMSPYGYSCTARPPTDARHQELSRIFAQALRAVHGTPYRTGPICNTIYQVNGDSVDYALEVLKVKLSLTAELRDTGARGFVLPADQIIPSGEETLAGTVAMLKAVIRG.

Residues 1 to 17 (MRSVLSLALLAANVVTA) form the signal peptide. A propeptide spans 18 to 112 (AVVSPFDYSG…FEAYSAGYAP (95 aa)) (activation peptide). Residues 119–419 (SYHSYQDHIS…AGTVAMLKAV (301 aa)) enclose the Peptidase M14 domain. Zn(2+) contacts are provided by H179 and E182. Substrate-binding positions include 179-182 (HARE), R237, and 254-255 (NR). A disulfide bond links C248 and C271. H309 serves as a coordination point for Zn(2+). 310–311 (SY) is a substrate binding site. E385 serves as the catalytic Proton donor/acceptor.

It belongs to the peptidase M14 family. Zn(2+) is required as a cofactor.

It is found in the secreted. Extracellular metalloprotease that contributes to pathogenicity. The chain is Metallocarboxypeptidase A (MCPA) from Trichophyton equinum (Horse ringworm fungus).